Consider the following 669-residue polypeptide: UvrABC system protein C (669 aa).

Positions 16–95 constitute a GIY-YIG domain; sequence TNPGVYRFRD…IKEFKPRFNV (80 aa). A UVR domain is found at 207-242; sequence KRFIGRLEKDMAAAVAELDYERAARVRDDIIALRKV.

The protein belongs to the UvrC family. In terms of assembly, interacts with UvrB in an incision complex.

The protein resides in the cytoplasm. Functionally, the UvrABC repair system catalyzes the recognition and processing of DNA lesions. UvrC both incises the 5' and 3' sides of the lesion. The N-terminal half is responsible for the 3' incision and the C-terminal half is responsible for the 5' incision. This is UvrABC system protein C from Arthrobacter sp. (strain FB24).